Reading from the N-terminus, the 423-residue chain is Imidazolonepropionase (423 aa).

2 residues coordinate Fe(3+): His-87 and His-89. Residues His-87 and His-89 each contribute to the Zn(2+) site. Arg-96, Tyr-159, and His-192 together coordinate 4-imidazolone-5-propanoate. Position 159 (Tyr-159) interacts with N-formimidoyl-L-glutamate. His-257 contacts Fe(3+). His-257 serves as a coordination point for Zn(2+). Residue Glu-260 coordinates 4-imidazolone-5-propanoate. Asp-331 is a Fe(3+) binding site. Asp-331 contacts Zn(2+). N-formimidoyl-L-glutamate-binding residues include Asn-333 and Gly-335. Ser-336 contacts 4-imidazolone-5-propanoate.

It belongs to the metallo-dependent hydrolases superfamily. HutI family. It depends on Zn(2+) as a cofactor. Fe(3+) serves as cofactor.

The protein localises to the cytoplasm. The catalysed reaction is 4-imidazolone-5-propanoate + H2O = N-formimidoyl-L-glutamate. It participates in amino-acid degradation; L-histidine degradation into L-glutamate; N-formimidoyl-L-glutamate from L-histidine: step 3/3. In terms of biological role, catalyzes the hydrolytic cleavage of the carbon-nitrogen bond in imidazolone-5-propanoate to yield N-formimidoyl-L-glutamate. It is the third step in the universal histidine degradation pathway. This chain is Imidazolonepropionase, found in Porphyromonas gingivalis (strain ATCC 33277 / DSM 20709 / CIP 103683 / JCM 12257 / NCTC 11834 / 2561).